The following is a 427-amino-acid chain: Gamma-glutamyl phosphate reductase (427 aa).

The protein belongs to the gamma-glutamyl phosphate reductase family.

It localises to the cytoplasm. The enzyme catalyses L-glutamate 5-semialdehyde + phosphate + NADP(+) = L-glutamyl 5-phosphate + NADPH + H(+). It participates in amino-acid biosynthesis; L-proline biosynthesis; L-glutamate 5-semialdehyde from L-glutamate: step 2/2. Functionally, catalyzes the NADPH-dependent reduction of L-glutamate 5-phosphate into L-glutamate 5-semialdehyde and phosphate. The product spontaneously undergoes cyclization to form 1-pyrroline-5-carboxylate. This is Gamma-glutamyl phosphate reductase from Rhizobium rhizogenes (strain K84 / ATCC BAA-868) (Agrobacterium radiobacter).